We begin with the raw amino-acid sequence, 341 residues long: Outer membrane protein assembly factor BamD (341 aa).

A signal peptide spans 1–17 (MQVKHLLLIAILALTAA). C18 is lipidated: N-palmitoyl cysteine. Residue C18 is the site of S-diacylglycerol cysteine attachment. The segment covering 289–316 (DVIKQYEDAEREIPAELKPENQDHSADD) has biased composition (basic and acidic residues). A disordered region spans residues 289–330 (DVIKQYEDAEREIPAELKPENQDHSADDEKPESDDDEDSGRS). Residues 317-326 (EKPESDDDED) are compositionally biased toward acidic residues.

This sequence belongs to the BamD family. In terms of assembly, part of the Bam complex.

It is found in the cell outer membrane. Part of the outer membrane protein assembly complex, which is involved in assembly and insertion of beta-barrel proteins into the outer membrane. In Pseudomonas aeruginosa (strain ATCC 15692 / DSM 22644 / CIP 104116 / JCM 14847 / LMG 12228 / 1C / PRS 101 / PAO1), this protein is Outer membrane protein assembly factor BamD.